The primary structure comprises 345 residues: Very-long-chain 3-oxoacyl-CoA reductase (345 aa).

A helical membrane pass occupies residues 26–46 (GAAVLLTTGTLFIASRVLTFV). Residues Val71, Asp125, Asp133, Asn152, Tyr219, Lys223, Ile252, and Ser254 each contribute to the NADP(+) site. The active-site Proton donor is Tyr219. Residue Lys223 is the Lowers pKa of active site Tyr of the active site.

The protein belongs to the short-chain dehydrogenases/reductases (SDR) family.

The protein resides in the endoplasmic reticulum membrane. It carries out the reaction a very-long-chain (3R)-3-hydroxyacyl-CoA + NADP(+) = a very-long-chain 3-oxoacyl-CoA + NADPH + H(+). It functions in the pathway lipid metabolism; fatty acid biosynthesis. Functionally, component of the microsomal membrane bound fatty acid elongation system, which produces the 26-carbon very long-chain fatty acids (VLCFA) from palmitate. Catalyzes the reduction of the 3-ketoacyl-CoA intermediate that is formed in each cycle of fatty acid elongation. VLCFAs serve as precursors for ceramide and sphingolipids. The chain is Very-long-chain 3-oxoacyl-CoA reductase from Aspergillus fumigatus (strain CBS 144.89 / FGSC A1163 / CEA10) (Neosartorya fumigata).